The chain runs to 510 residues: GMP synthase [glutamine-hydrolyzing] (510 aa).

Residues 5-195 enclose the Glutamine amidotransferase type-1 domain; it reads LVLVIDFGGQ…LFKICGLKED (191 aa). Cys82 acts as the Nucleophile in catalysis. Active-site residues include His169 and Glu171. The 190-residue stretch at 196–385 folds into the GMPS ATP-PPase domain; the sequence is WSMSSFAKEK…LGIPHKLVWR (190 aa). 223–229 lines the ATP pocket; that stretch reads SGGVDSS.

In terms of assembly, homodimer.

It catalyses the reaction XMP + L-glutamine + ATP + H2O = GMP + L-glutamate + AMP + diphosphate + 2 H(+). It participates in purine metabolism; GMP biosynthesis; GMP from XMP (L-Gln route): step 1/1. In terms of biological role, catalyzes the synthesis of GMP from XMP. In Clostridium acetobutylicum (strain ATCC 824 / DSM 792 / JCM 1419 / IAM 19013 / LMG 5710 / NBRC 13948 / NRRL B-527 / VKM B-1787 / 2291 / W), this protein is GMP synthase [glutamine-hydrolyzing].